A 112-amino-acid chain; its full sequence is UstYa family oxidase VicYb (112 aa).

Short sequence motifs (HXXHC) lie at residues 9 to 13 (HYLHC) and 36 to 40 (HLDHC).

Belongs to the ustYa family.

The protein operates within mycotoxin biosynthesis. In terms of biological role, ustYa family oxidase, part of the gene cluster that mediates the biosynthesis of the secondary metabolite victorin, the molecular basis for Victoria blight of oats. Within the pathway, vicYb catalyzes the oxidative cyclization of the core peptide. The pathway starts with the processing of the precursor vicA1 by several endopeptidases including kexin proteases as well as the cluster-specific S28 family peptidases vicPa and vicPb to produce 7 identical copies of the hexapeptide Gly-Leu-Lys-Leu-Ala-Phe. After being excised from the precursor peptide, the core peptides are cyclized and modified post-translationally by enzymes encoded within the gene cluster. The ustYa family oxidase vicYb is required for the formation of the macrocycle in victorin and the copper amine oxidases (CAOs) vicK1 and vicK2 are responsible for converting victorin to the active form by oxidizing the N-terminal glycyl residue in the peptides to glyoxylate. Relaxed substrate specificity of enzymes in the victorin biosynthetic pathway results in a metabolic grid that produces a set of analogs including victorinines B, C, E or HV-toxin M. The sequence is that of UstYa family oxidase VicYb from Bipolaris victoriae (strain FI3) (Victoria blight of oats agent).